Consider the following 324-residue polypeptide: Zinc transporter ZIP1 (324 aa).

At 1–30 (MGPWGEPELLVWRPEAVASEPSVPVGLEVK) the chain is on the extracellular side. A helical transmembrane segment spans residues 31-51 (LGALVLLLLLTLICSLVPVCV). Over 52-68 (LRRSGANHEASASGQKA) the chain is Cytoplasmic. A helical membrane pass occupies residues 69–89 (LSLVSCFAGGVFLATCLLDLL). The Extracellular segment spans residues 90–104 (PDYLAAIDEALEALH). Residues 105–125 (VTLQFPLQEFILAMGFFLVLV) traverse the membrane as a helical segment. Topologically, residues 126–179 (MEQITLAYKEQTSPPHPEETRALLGTVNGGPQHWHDGPGIPQAGGTPAAPSALR) are cytoplasmic. A helical membrane pass occupies residues 180–200 (ACVLVFSLALHSVFEGLAVGL). The Extracellular segment spans residues 201-206 (QRDRAR). A helical membrane pass occupies residues 207–227 (AMELCLALLLHKGILAVSLSL). Topologically, residues 228–237 (RLLQSHLRVQ) are cytoplasmic. Residues 238–258 (VVAGCGILFSCMTPLGIGLGA) traverse the membrane as a helical segment. Residues 259–272 (ALAESAGPLHQLAQ) lie on the Extracellular side of the membrane. A helical transmembrane segment spans residues 273-293 (SVLEGMAAGTFLYITFLEILP). Residues 294–303 (QELATSEQRI) lie on the Cytoplasmic side of the membrane. The helical transmembrane segment at 304-324 (LKVILLLAGFALLTGLLFVQI) threads the bilayer.

It belongs to the ZIP transporter (TC 2.A.5) family. As to expression, ubiquitous, except in the pancreas. Highest levels seen in kidney, salivary gland and placenta.

The protein localises to the cell membrane. The protein resides in the endoplasmic reticulum membrane. It carries out the reaction Zn(2+)(in) = Zn(2+)(out). In terms of biological role, transporter for the divalent cation Zn(2+). Mediates the influx of Zn(2+) into cells from extracellular space. This Mus musculus (Mouse) protein is Zinc transporter ZIP1 (Slc39a1).